The sequence spans 214 residues: 3,4-dihydroxy-2-butanone 4-phosphate synthase (214 aa).

Residues 37–38, Asp-42, 150–154, and Glu-174 each bind D-ribulose 5-phosphate; these read RE and RPGHT. Glu-38 lines the Mg(2+) pocket. His-153 contributes to the Mg(2+) binding site.

Belongs to the DHBP synthase family. In terms of assembly, homodimer. It depends on Mg(2+) as a cofactor. Requires Mn(2+) as cofactor.

It catalyses the reaction D-ribulose 5-phosphate = (2S)-2-hydroxy-3-oxobutyl phosphate + formate + H(+). Its pathway is cofactor biosynthesis; riboflavin biosynthesis; 2-hydroxy-3-oxobutyl phosphate from D-ribulose 5-phosphate: step 1/1. Catalyzes the conversion of D-ribulose 5-phosphate to formate and 3,4-dihydroxy-2-butanone 4-phosphate. The polypeptide is 3,4-dihydroxy-2-butanone 4-phosphate synthase (Mannheimia succiniciproducens (strain KCTC 0769BP / MBEL55E)).